Consider the following 184-residue polypeptide: Ras-related protein RabN2 (184 aa).

GTP is bound at residue 3–10 (GDYRSGKT). Residues 25–32 (TNPSTFDY) carry the Effector region motif. Residues 50–54 (DTAGH) and 117–120 (TKSD) contribute to the GTP site.

It belongs to the small GTPase superfamily. Rab family.

The chain is Ras-related protein RabN2 (rabN2) from Dictyostelium discoideum (Social amoeba).